A 97-amino-acid polypeptide reads, in one-letter code: CRISPR-associated endoribonuclease Cas2 1 (97 aa).

D12 is a Mg(2+) binding site.

It belongs to the CRISPR-associated endoribonuclease Cas2 protein family. Homodimer, forms a heterotetramer with a Cas1 homodimer. Mg(2+) is required as a cofactor.

Its function is as follows. CRISPR (clustered regularly interspaced short palindromic repeat) is an adaptive immune system that provides protection against mobile genetic elements (viruses, transposable elements and conjugative plasmids). CRISPR clusters contain sequences complementary to antecedent mobile elements and target invading nucleic acids. CRISPR clusters are transcribed and processed into CRISPR RNA (crRNA). Functions as a ssRNA-specific endoribonuclease. Involved in the integration of spacer DNA into the CRISPR cassette. The chain is CRISPR-associated endoribonuclease Cas2 1 from Francisella tularensis subsp. novicida (strain U112).